Here is a 394-residue protein sequence, read N- to C-terminus: Phosphoglycerate kinase (394 aa).

Substrate is bound by residues 21 to 23 (DLN), Arg-37, 60 to 63 (HLGR), Arg-115, and Arg-148. ATP-binding positions include Lys-199, Glu-321, and 347–350 (GGDT).

This sequence belongs to the phosphoglycerate kinase family. As to quaternary structure, monomer.

The protein localises to the cytoplasm. It carries out the reaction (2R)-3-phosphoglycerate + ATP = (2R)-3-phospho-glyceroyl phosphate + ADP. It functions in the pathway carbohydrate degradation; glycolysis; pyruvate from D-glyceraldehyde 3-phosphate: step 2/5. In Azoarcus sp. (strain BH72), this protein is Phosphoglycerate kinase.